The sequence spans 1043 residues: Probable inorganic carbon transporter subunit DabA (1043 aa).

The Zn(2+) site is built by Cys460, Asp462, His719, and Cys734.

This sequence belongs to the inorganic carbon transporter (TC 9.A.2) DabA family. As to quaternary structure, forms a complex with DabB. Zn(2+) is required as a cofactor.

It localises to the cell inner membrane. Functionally, part of an energy-coupled inorganic carbon pump. This is Probable inorganic carbon transporter subunit DabA from Thiobacillus denitrificans (strain ATCC 25259 / T1).